A 375-amino-acid chain; its full sequence is N-acetyldiaminopimelate deacetylase (375 aa).

D69 is an active-site residue. The Proton acceptor role is filled by E128.

The protein belongs to the peptidase M20A family. N-acetyldiaminopimelate deacetylase subfamily.

It catalyses the reaction N-acetyl-(2S,6S)-2,6-diaminopimelate + H2O = (2S,6S)-2,6-diaminopimelate + acetate. It participates in amino-acid biosynthesis; L-lysine biosynthesis via DAP pathway; LL-2,6-diaminopimelate from (S)-tetrahydrodipicolinate (acetylase route): step 3/3. Its function is as follows. Catalyzes the conversion of N-acetyl-diaminopimelate to diaminopimelate and acetate. The chain is N-acetyldiaminopimelate deacetylase from Streptococcus suis (strain 05ZYH33).